The chain runs to 242 residues: Uridylate kinase (242 aa).

16 to 19 (KVSG) contributes to the ATP binding site. Residue Gly58 participates in UMP binding. Gly59 and Arg63 together coordinate ATP. UMP contacts are provided by residues Asp78 and 139–146 (TGNPFCTT). ATP-binding residues include Thr166, Gln167, Tyr172, and Asp175.

The protein belongs to the UMP kinase family. Homohexamer.

It is found in the cytoplasm. It carries out the reaction UMP + ATP = UDP + ADP. It functions in the pathway pyrimidine metabolism; CTP biosynthesis via de novo pathway; UDP from UMP (UMPK route): step 1/1. Its activity is regulated as follows. Inhibited by UTP. In terms of biological role, catalyzes the reversible phosphorylation of UMP to UDP. The protein is Uridylate kinase of Rickettsia felis (strain ATCC VR-1525 / URRWXCal2) (Rickettsia azadi).